A 507-amino-acid chain; its full sequence is Glutamate--tRNA ligase (507 aa).

A 'HIGH' region motif is present at residues 14 to 24; the sequence is PSPTGYLHIGG. The short motif at 261–265 is the 'KMSKS' region element; the sequence is KLSKR. Lys264 provides a ligand contact to ATP.

The protein belongs to the class-I aminoacyl-tRNA synthetase family. Glutamate--tRNA ligase type 1 subfamily. In terms of assembly, monomer.

It is found in the cytoplasm. The enzyme catalyses tRNA(Glu) + L-glutamate + ATP = L-glutamyl-tRNA(Glu) + AMP + diphosphate. Catalyzes the attachment of glutamate to tRNA(Glu) in a two-step reaction: glutamate is first activated by ATP to form Glu-AMP and then transferred to the acceptor end of tRNA(Glu). This chain is Glutamate--tRNA ligase, found in Roseiflexus castenholzii (strain DSM 13941 / HLO8).